Consider the following 341-residue polypeptide: MRLCLIPRNTGTPQRVLRPVVWSPPSRKKPVLSPHNSIMFGHLSPVRIPCLRGKFNLQLPSLDDQVIPARLPKTEVSAEEPKEATEVKDQVETQGQEDNKRGPCSNGEAASTSRPLETQGNLTSSWYNPRPLEGNVHLKSLTEKNQTDKAQVHAVSFYSKGHGVASSHSPAGGILPFGKPDPLPTVLPAPVPGCSLWPEKAALKVLGEDHLPSSPGLLMVGEDMQPKDPAALGSSRSSPPRAAGHRSHKRKLSGPPLQLQPTPPLQLRCDRDERPPPAKLPCLSPEALLVGQASQREGRLQHGNMRKNMRVLSRISKFRRLRQLLRRRKKTRQGRRGGSCL.

Disordered regions lie at residues 72 to 131 (PKTE…NPRP) and 216 to 283 (GLLM…LPCL). Basic and acidic residues predominate over residues 79–101 (EEPKEATEVKDQVETQGQEDNKR). Over residues 108–127 (EAASTSRPLETQGNLTSSWY) the composition is skewed to polar residues. The segment covering 243 to 252 (AGHRSHKRKL) has biased composition (basic residues).

The protein belongs to the UPF0607 family.

The polypeptide is Putative UPF0607 protein FLJ37424 (Homo sapiens (Human)).